The primary structure comprises 40 residues: Ferredoxin-2 (40 aa).

The 2Fe-2S ferredoxin-type domain maps to 3-40; the sequence is YNIKLITPEGTKEITCSDSEYILDAAEEKGLDLPYSCR. Cys39 contacts [2Fe-2S] cluster.

It belongs to the 2Fe2S plant-type ferredoxin family. The cofactor is [2Fe-2S] cluster.

It localises to the plastid. Its subcellular location is the chloroplast. Ferredoxins are iron-sulfur proteins that transfer electrons in a wide variety of metabolic reactions. The protein is Ferredoxin-2 of Pisum sativum (Garden pea).